Here is a 234-residue protein sequence, read N- to C-terminus: Probable ascorbate-specific transmembrane electron transporter 1 (234 aa).

Over 1–9 the chain is Cytoplasmic; it reads MGLGVRAAP. The helical transmembrane segment at 10-30 threads the bilayer; sequence FTYVAHALAVAAATMVLVWCI. The Cytochrome b561 domain maps to 13–217; it reads VAHALAVAAA…FGASVVVAAV (205 aa). At 31–48 the chain is on the extracellular side; it reads HFRGGLAFEATNKNLIFN. Residues 49 to 69 traverse the membrane as a helical segment; the sequence is VHPVLMLIGYIILGSEAIMVY. H50 provides a ligand contact to heme b. An L-ascorbate-binding site is contributed by 65-73; the sequence is AIMVYKVLP. The Cytoplasmic portion of the chain corresponds to 70–82; that stretch reads KVLPTWKHDTTKL. Residues 83 to 103 traverse the membrane as a helical segment; that stretch reads IHLILHAIALVFGAVGIYCAF. 2 residues coordinate heme b: H84 and H118. The Extracellular segment spans residues 104–121; sequence KFHNESGIANLYSLHSWL. 114 to 123 is a monodehydro-L-ascorbate radical binding site; sequence LYSLHSWLGI. The chain crosses the membrane as a helical span at residues 122–142; that stretch reads GIGTICLYGIQWIFGFVAFFF. Residues 143 to 151 are Cytoplasmic-facing; it reads PRASPSVRK. Residues 152–172 traverse the membrane as a helical segment; it reads GVLPWHILFGLFVYILALATA. H157 serves as a coordination point for heme b. Residues 173–194 lie on the Extracellular side of the membrane; the sequence is ELGFLEKLTFLQSSGLDKYGAE. Residues 195-215 traverse the membrane as a helical segment; that stretch reads AFLVNFTALIVVLFGASVVVA. The Cytoplasmic portion of the chain corresponds to 216–234; it reads AVSPARVEEPHEYAPIPES.

Requires heme b as cofactor.

It localises to the membrane. Its function is as follows. Two-heme-containing cytochrome. Catalyzes ascorbate-dependent trans-membrane electron transfer by utilizing a concerted H(+)/e(-) transfer mechanism. This Oryza sativa subsp. japonica (Rice) protein is Probable ascorbate-specific transmembrane electron transporter 1.